The sequence spans 228 residues: 7-cyano-7-deazaguanine synthase (228 aa).

Residue 9 to 19 (LSGGPDSTTVL) coordinates ATP. Zn(2+) contacts are provided by Cys193, Cys203, Cys206, and Cys209.

It belongs to the QueC family. It depends on Zn(2+) as a cofactor.

It catalyses the reaction 7-carboxy-7-deazaguanine + NH4(+) + ATP = 7-cyano-7-deazaguanine + ADP + phosphate + H2O + H(+). Its pathway is purine metabolism; 7-cyano-7-deazaguanine biosynthesis. Catalyzes the ATP-dependent conversion of 7-carboxy-7-deazaguanine (CDG) to 7-cyano-7-deazaguanine (preQ(0)). This chain is 7-cyano-7-deazaguanine synthase, found in Rickettsia massiliae (strain Mtu5).